The following is a 427-amino-acid chain: Glutamate-1-semialdehyde 2,1-aminomutase (427 aa).

At Lys-268 the chain carries N6-(pyridoxal phosphate)lysine.

It belongs to the class-III pyridoxal-phosphate-dependent aminotransferase family. HemL subfamily. The cofactor is pyridoxal 5'-phosphate.

It localises to the cytoplasm. It carries out the reaction (S)-4-amino-5-oxopentanoate = 5-aminolevulinate. The protein operates within porphyrin-containing compound metabolism; protoporphyrin-IX biosynthesis; 5-aminolevulinate from L-glutamyl-tRNA(Glu): step 2/2. The polypeptide is Glutamate-1-semialdehyde 2,1-aminomutase (Methanococcus maripaludis (strain C5 / ATCC BAA-1333)).